We begin with the raw amino-acid sequence, 307 residues long: tRNA pseudouridine synthase B (307 aa).

Catalysis depends on aspartate 41, which acts as the Nucleophile.

It belongs to the pseudouridine synthase TruB family. Type 1 subfamily.

It carries out the reaction uridine(55) in tRNA = pseudouridine(55) in tRNA. Its function is as follows. Responsible for synthesis of pseudouridine from uracil-55 in the psi GC loop of transfer RNAs. In Prochlorococcus marinus (strain MIT 9312), this protein is tRNA pseudouridine synthase B.